The chain runs to 448 residues: Methylenetetrahydrofolate--tRNA-(uracil-5-)-methyltransferase TrmFO (448 aa).

Gly13–Gly18 provides a ligand contact to FAD.

It belongs to the MnmG family. TrmFO subfamily. Requires FAD as cofactor.

It localises to the cytoplasm. The enzyme catalyses uridine(54) in tRNA + (6R)-5,10-methylene-5,6,7,8-tetrahydrofolate + NADH + H(+) = 5-methyluridine(54) in tRNA + (6S)-5,6,7,8-tetrahydrofolate + NAD(+). It catalyses the reaction uridine(54) in tRNA + (6R)-5,10-methylene-5,6,7,8-tetrahydrofolate + NADPH + H(+) = 5-methyluridine(54) in tRNA + (6S)-5,6,7,8-tetrahydrofolate + NADP(+). In terms of biological role, catalyzes the folate-dependent formation of 5-methyl-uridine at position 54 (M-5-U54) in all tRNAs. This Streptococcus pyogenes serotype M2 (strain MGAS10270) protein is Methylenetetrahydrofolate--tRNA-(uracil-5-)-methyltransferase TrmFO.